The chain runs to 239 residues: Ribonuclease PH (239 aa).

Phosphate-binding positions include R87 and 125–127 (GTR).

The protein belongs to the RNase PH family. Homohexameric ring arranged as a trimer of dimers.

The enzyme catalyses tRNA(n+1) + phosphate = tRNA(n) + a ribonucleoside 5'-diphosphate. Functionally, phosphorolytic 3'-5' exoribonuclease that plays an important role in tRNA 3'-end maturation. Removes nucleotide residues following the 3'-CCA terminus of tRNAs; can also add nucleotides to the ends of RNA molecules by using nucleoside diphosphates as substrates, but this may not be physiologically important. Probably plays a role in initiation of 16S rRNA degradation (leading to ribosome degradation) during starvation. The chain is Ribonuclease PH from Cellvibrio japonicus (strain Ueda107) (Pseudomonas fluorescens subsp. cellulosa).